We begin with the raw amino-acid sequence, 200 residues long: Nitrile hydratase subunit alpha (200 aa).

Residues Cys-105, Cys-108, Ser-109, and Cys-110 each coordinate Fe(3+). Cys-108 is modified (cysteine sulfinic acid (-SO2H)). Cys-110 carries the post-translational modification Cysteine sulfenic acid (-SOH).

Belongs to the nitrile hydratase subunit alpha family. Heterodimer of an alpha and a beta chain. It depends on Fe(3+) as a cofactor. Oxidation on Cys-108 is essential for the activity. Post-translationally, oxidation on Cys-110 stabilizes the Fe-NO ligand coordinated in the inactive form.

The catalysed reaction is an aliphatic primary amide = an aliphatic nitrile + H2O. Its activity is regulated as follows. Inactivated by oxidation of Cys-110 to a sulfenic acid. NHase catalyzes the hydration of various nitrile compounds to the corresponding amides. Industrial production of acrylamide is now being developed using some of the enzymes of this class. In Pseudomonas chlororaphis (Pseudomonas aureofaciens), this protein is Nitrile hydratase subunit alpha (nthA).